The chain runs to 203 residues: uncharacterized protein (203 aa).

A helical membrane pass occupies residues 89-109 (CEIPFAACSVLSWSLPTIAAL).

The protein resides in the membrane. This is an uncharacterized protein from Saccharomyces cerevisiae (strain ATCC 204508 / S288c) (Baker's yeast).